Reading from the N-terminus, the 80-residue chain is Saposin-B-Val (80 aa).

The Saposin B-type domain occupies 1–80 (GDVCQDCIQM…CGLVGFCEEV (80 aa)). Disulfide bonds link cysteine 4-cysteine 77, cysteine 7-cysteine 71, and cysteine 36-cysteine 47. The N-linked (GlcNAc...) (complex) asparagine glycan is linked to asparagine 21.

In terms of assembly, saposin-B is a homodimer. Interacts with GRN; facilitates lysosomal delivery of progranulin from the extracellular space and the biosynthetic pathway. The one residue extended Saposin-B-Val is only found in a minority of the chains.

In terms of biological role, saposin-B stimulates the hydrolysis of galacto-cerebroside sulfate by arylsulfatase A (EC 3.1.6.8), GM1 gangliosides by beta-galactosidase (EC 3.2.1.23) and globotriaosylceramide by alpha-galactosidase A (EC 3.2.1.22). Saposin-B forms a solubilizing complex with the substrates of the sphingolipid hydrolases. In Sus scrofa (Pig), this protein is Saposin-B-Val (PSAP).